A 383-amino-acid chain; its full sequence is Serpin B5 (383 aa).

N-linked (GlcNAc...) asparagine glycans are attached at residues Asn106, Asn133, Asn176, and Asn361.

Belongs to the serpin family. Ov-serpin subfamily.

The protein resides in the secreted. Its subcellular location is the extracellular space. In terms of biological role, may not exhibit serine protease inhibitory activity. This chain is Serpin B5 (serpinb5), found in Xenopus laevis (African clawed frog).